A 226-amino-acid chain; its full sequence is Thiamine-phosphate synthase (226 aa).

4-amino-2-methyl-5-(diphosphooxymethyl)pyrimidine-binding positions include 46 to 50 and asparagine 87; that span reads QLRDK. Positions 88 and 107 each coordinate Mg(2+). Residue serine 126 participates in 4-amino-2-methyl-5-(diphosphooxymethyl)pyrimidine binding. 152–154 contacts 2-[(2R,5Z)-2-carboxy-4-methylthiazol-5(2H)-ylidene]ethyl phosphate; it reads TPT. Lysine 155 provides a ligand contact to 4-amino-2-methyl-5-(diphosphooxymethyl)pyrimidine. A 2-[(2R,5Z)-2-carboxy-4-methylthiazol-5(2H)-ylidene]ethyl phosphate-binding site is contributed by glycine 183.

The protein belongs to the thiamine-phosphate synthase family. Mg(2+) is required as a cofactor.

It carries out the reaction 2-[(2R,5Z)-2-carboxy-4-methylthiazol-5(2H)-ylidene]ethyl phosphate + 4-amino-2-methyl-5-(diphosphooxymethyl)pyrimidine + 2 H(+) = thiamine phosphate + CO2 + diphosphate. The enzyme catalyses 2-(2-carboxy-4-methylthiazol-5-yl)ethyl phosphate + 4-amino-2-methyl-5-(diphosphooxymethyl)pyrimidine + 2 H(+) = thiamine phosphate + CO2 + diphosphate. It catalyses the reaction 4-methyl-5-(2-phosphooxyethyl)-thiazole + 4-amino-2-methyl-5-(diphosphooxymethyl)pyrimidine + H(+) = thiamine phosphate + diphosphate. It participates in cofactor biosynthesis; thiamine diphosphate biosynthesis; thiamine phosphate from 4-amino-2-methyl-5-diphosphomethylpyrimidine and 4-methyl-5-(2-phosphoethyl)-thiazole: step 1/1. In terms of biological role, condenses 4-methyl-5-(beta-hydroxyethyl)thiazole monophosphate (THZ-P) and 2-methyl-4-amino-5-hydroxymethyl pyrimidine pyrophosphate (HMP-PP) to form thiamine monophosphate (TMP). The sequence is that of Thiamine-phosphate synthase from Mycobacterium sp. (strain KMS).